We begin with the raw amino-acid sequence, 186 residues long: Ribosome-recycling factor (186 aa).

This sequence belongs to the RRF family.

The protein resides in the cytoplasm. Functionally, responsible for the release of ribosomes from messenger RNA at the termination of protein biosynthesis. May increase the efficiency of translation by recycling ribosomes from one round of translation to another. The sequence is that of Ribosome-recycling factor from Bartonella henselae (strain ATCC 49882 / DSM 28221 / CCUG 30454 / Houston 1) (Rochalimaea henselae).